Reading from the N-terminus, the 463-residue chain is Retinoic acid receptor RXR-gamma (463 aa).

Residues 1 to 138 (MYGNYSHFMK…TSPGSLVKHI (138 aa)) are modulating. The segment at 18 to 53 (SPGHTGSTSMSPSAALSTGKPMDSHPSYTDTPVSAP) is disordered. Over residues 21–33 (HTGSTSMSPSAAL) the composition is skewed to polar residues. The nuclear receptor DNA-binding region spans 136–211 (KHICAICGDR…MGMKREAVQE (76 aa)). NR C4-type zinc fingers lie at residues 139 to 159 (CAICGDRSSGKHYGVYSCEGC) and 175 to 199 (CRDNKDCLIDKRQRNRCQYCRYQKC). The segment at 205-230 (KREAVQEERQRSRERAESEAECATSG) is hinge. An NR LBD domain is found at 231–459 (HEDMPVERIL…TFLMEMLETP (229 aa)).

It belongs to the nuclear hormone receptor family. NR2 subfamily. In terms of assembly, homodimer. Heterodimer with a RAR molecule. Binds DNA preferentially as a RAR/RXR heterodimer. Interacts with RARA. Post-translationally, acetylated by EP300. In terms of tissue distribution, expressed in aortic endothelial cells (at protein level).

It is found in the nucleus. The protein localises to the cytoplasm. Its function is as follows. Receptor for retinoic acid. Retinoic acid receptors bind as heterodimers to their target response elements in response to their ligands, all-trans or 9-cis retinoic acid, and regulate gene expression in various biological processes. The RAR/RXR heterodimers bind to the retinoic acid response elements (RARE) composed of tandem 5'-AGGTCA-3' sites known as DR1-DR5. The high affinity ligand for RXRs is 9-cis retinoic acid. The polypeptide is Retinoic acid receptor RXR-gamma (RXRG) (Homo sapiens (Human)).